The sequence spans 425 residues: Serine--tRNA ligase (425 aa).

231–233 contacts L-serine; it reads TAE. 262-264 is an ATP binding site; it reads RSE. An L-serine-binding site is contributed by Glu285. 349–352 is an ATP binding site; that stretch reads EISS. Ser385 serves as a coordination point for L-serine.

It belongs to the class-II aminoacyl-tRNA synthetase family. Type-1 seryl-tRNA synthetase subfamily. As to quaternary structure, homodimer. The tRNA molecule binds across the dimer.

It is found in the cytoplasm. It catalyses the reaction tRNA(Ser) + L-serine + ATP = L-seryl-tRNA(Ser) + AMP + diphosphate + H(+). The catalysed reaction is tRNA(Sec) + L-serine + ATP = L-seryl-tRNA(Sec) + AMP + diphosphate + H(+). It participates in aminoacyl-tRNA biosynthesis; selenocysteinyl-tRNA(Sec) biosynthesis; L-seryl-tRNA(Sec) from L-serine and tRNA(Sec): step 1/1. In terms of biological role, catalyzes the attachment of serine to tRNA(Ser). Is also able to aminoacylate tRNA(Sec) with serine, to form the misacylated tRNA L-seryl-tRNA(Sec), which will be further converted into selenocysteinyl-tRNA(Sec). This Desulfosudis oleivorans (strain DSM 6200 / JCM 39069 / Hxd3) (Desulfococcus oleovorans) protein is Serine--tRNA ligase.